A 196-amino-acid chain; its full sequence is 3-isopropylmalate dehydratase small subunit (196 aa).

It belongs to the LeuD family. LeuD type 1 subfamily. Heterodimer of LeuC and LeuD.

It carries out the reaction (2R,3S)-3-isopropylmalate = (2S)-2-isopropylmalate. It functions in the pathway amino-acid biosynthesis; L-leucine biosynthesis; L-leucine from 3-methyl-2-oxobutanoate: step 2/4. Catalyzes the isomerization between 2-isopropylmalate and 3-isopropylmalate, via the formation of 2-isopropylmaleate. This is 3-isopropylmalate dehydratase small subunit from Corynebacterium diphtheriae (strain ATCC 700971 / NCTC 13129 / Biotype gravis).